The chain runs to 492 residues: Ribulose bisphosphate carboxylase large chain (492 aa).

Residues asparagine 131 and threonine 181 each coordinate substrate. Residue lysine 183 is the Proton acceptor of the active site. Lysine 185 provides a ligand contact to substrate. Mg(2+) is bound by residues lysine 209, aspartate 211, and glutamate 212. At lysine 209 the chain carries N6-carboxylysine. Histidine 301 functions as the Proton acceptor in the catalytic mechanism. Positions 302, 334, and 386 each coordinate substrate.

This sequence belongs to the RuBisCO large chain family. Type I subfamily. Heterohexadecamer of 8 large chains and 8 small chains. It depends on Mg(2+) as a cofactor.

The enzyme catalyses 2 (2R)-3-phosphoglycerate + 2 H(+) = D-ribulose 1,5-bisphosphate + CO2 + H2O. It catalyses the reaction D-ribulose 1,5-bisphosphate + O2 = 2-phosphoglycolate + (2R)-3-phosphoglycerate + 2 H(+). Its function is as follows. RuBisCO catalyzes two reactions: the carboxylation of D-ribulose 1,5-bisphosphate, the primary event in carbon dioxide fixation, as well as the oxidative fragmentation of the pentose substrate. Both reactions occur simultaneously and in competition at the same active site. In Nitrosococcus oceani (strain ATCC 19707 / BCRC 17464 / JCM 30415 / NCIMB 11848 / C-107), this protein is Ribulose bisphosphate carboxylase large chain.